A 279-amino-acid chain; its full sequence is uncharacterized protein (279 aa).

2 disordered regions span residues 50–109 (YTYN…YNKN) and 249–279 (SQSQ…SPKL). A compositionally biased stretch (low complexity) spans 68 to 109 (NNNSNYNNNNNNNNNNNNNNNNNNNNNNNKNNNNNNYNYNKN).

This is an uncharacterized protein from Dictyostelium discoideum (Social amoeba).